We begin with the raw amino-acid sequence, 463 residues long: HEPACAM family member 2 (463 aa).

Positions 1–32 (MGQDAFMELLRSMVGLSLCKIHLLLIAGSCLG) are cleaved as a signal peptide. 3 N-linked (GlcNAc...) asparagine glycosylation sites follow: Asn-86, Asn-130, and Asn-166. 2 consecutive Ig-like C2-type domains span residues 150–234 (PMVQ…SDII) and 236–332 (PTIY…TRFT). 2 disulfides stabilise this stretch: Cys-171-Cys-220 and Cys-271-Cys-316. The N-linked (GlcNAc...) asparagine glycan is linked to Asn-321. A helical transmembrane segment spans residues 353-373 (LASITGISLFLIISMCLLFLW). Over 374-463 (KKYQPYKAIR…IPEQQQENTE (90 aa)) the chain is Cytoplasmic.

In terms of processing, poly-ADP-ribosylated (PARsylated) by tankyrase TNKS during late G2 and prophase, leading to translocation to mitotic centrosomes. N-glycosylated.

Its subcellular location is the golgi apparatus membrane. It is found in the cytoplasm. The protein localises to the cytoskeleton. It localises to the spindle. The protein resides in the microtubule organizing center. Its subcellular location is the centrosome. It is found in the midbody. Required during prometaphase for centrosome maturation. Following poly-ADP-ribosylation (PARsylation) by TNKS, translocates from the Golgi apparatus to mitotic centrosomes and plays a key role in the formation of robust microtubules for prompt movement of chromosomes: anchors AKAP9/CG-NAP, a scaffold protein of the gamma-tubulin ring complex and promotes centrosome maturation. The chain is HEPACAM family member 2 (Hepacam2) from Mus musculus (Mouse).